The following is a 311-amino-acid chain: Bifunctional protein FolD (311 aa).

Residues 180–182, Ser209, and Ile250 each bind NADP(+); that span reads GRS.

The protein belongs to the tetrahydrofolate dehydrogenase/cyclohydrolase family. Homodimer.

It carries out the reaction (6R)-5,10-methylene-5,6,7,8-tetrahydrofolate + NADP(+) = (6R)-5,10-methenyltetrahydrofolate + NADPH. The catalysed reaction is (6R)-5,10-methenyltetrahydrofolate + H2O = (6R)-10-formyltetrahydrofolate + H(+). The protein operates within one-carbon metabolism; tetrahydrofolate interconversion. Its function is as follows. Catalyzes the oxidation of 5,10-methylenetetrahydrofolate to 5,10-methenyltetrahydrofolate and then the hydrolysis of 5,10-methenyltetrahydrofolate to 10-formyltetrahydrofolate. In Haloquadratum walsbyi (strain DSM 16790 / HBSQ001), this protein is Bifunctional protein FolD.